The following is a 106-amino-acid chain: Small ribosomal subunit protein uS10 (106 aa).

Belongs to the universal ribosomal protein uS10 family. Part of the 30S ribosomal subunit.

Functionally, involved in the binding of tRNA to the ribosomes. This chain is Small ribosomal subunit protein uS10, found in Prochlorococcus marinus (strain MIT 9211).